The sequence spans 244 residues: T-cell immunoreceptor with Ig and ITIM domains (244 aa).

A signal peptide spans 1-21 (MRWCLLLIWAQGLRQAPLASG). The 103-residue stretch at 22 to 124 (MMTGTIETTG…DGTYTGRIFL (103 aa)) folds into the Ig-like V-type domain. The Extracellular segment spans residues 22–141 (MMTGTIETTG…AEHGARFQIP (120 aa)). 2 N-linked (GlcNAc...) asparagine glycosylation sites follow: asparagine 32 and asparagine 101. The segment at 32 to 42 (NISAEKGGSII) is homodimerization. A disulfide bond links cysteine 45 and cysteine 108. Residues 142–162 (LLGAMAATLVVICTAVIVVVA) traverse the membrane as a helical segment. Residues 163–244 (LTRKKKALRI…GNCSFFTETG (82 aa)) are Cytoplasmic-facing. Phosphotyrosine is present on tyrosine 225. The short motif at 229 to 234 (LSYRSL) is the ITIM motif element.

As to quaternary structure, homodimer in cis; binds with high affinity to PVR, forming a heterotetrameric assembly of two TIGIT and two PVR molecules. Binds with lower affinity to NECTIN2 and NECTIN3. Interacts with GRB2. Interacts with NECTIN4. Expressed at low levels on peripheral memory and regulatory CD4+ T-cells and NK cells and is up-regulated following activation of these cells (at protein level).

The protein resides in the cell membrane. Its function is as follows. Inhibitory receptor that plays a role in the modulation of immune responses. Suppresses T-cell activation by promoting the generation of mature immunoregulatory dendritic cells. Upon binding to its ligands PVR/CD155 or NECTIN2/CD112, which are expressed on antigen-presenting cells, sends inhibitory signals to the T-cell or NK cell. Mechanistically, interaction with ligand leads to phosphorylation of the cytoplasmic tail by Src family tyrosine kinases such as FYN or LCK, allowing subsequent binding to adapter GRB2 and SHIP1/INPP5D. In turn, inhibits PI3K and MAPK signaling cascades. In addition, associates with beta-arrestin-2/ARRB2 to recruit SHIP1/INPP5D that suppresses autoubiquitination of TRAF6 and subsequently inhibits NF-kappa-B signaling pathway. Also acts as a receptor for NECTIN4 to inhibit NK cell cytotoxicity. This chain is T-cell immunoreceptor with Ig and ITIM domains (TIGIT), found in Homo sapiens (Human).